Consider the following 318-residue polypeptide: MFTKILGTGSYLPKYIRSNIILEKMVDTSNAWIIARTGIKERRISNSSETVAKMGYFASKKALDMSCIEANEIGIIIVATTSSSHAFPSSACQIQRDLKISDTIAFDLSAACSGFVYALDVANQYIKNGVVKYALIVGSDILSHFLNPNDRSTLILFGDGAGAVILGRSKSPGIISTHLHANGYYGDLLTLPHYNTQNPEKLSVYLTMSGNKVFKMAIATLTGIINETLHANNLQQDELDWLVPHQANLRIISKAAKRLNIDMEKIIITLHKHGNTSAASIPLALDEAVRDGRIKSNQLLLLEAFGAGLTWGSVLLRF.

Catalysis depends on residues C112 and H245. The segment at 246 to 250 is ACP-binding; that stretch reads QANLR. N275 is an active-site residue.

The protein belongs to the thiolase-like superfamily. FabH family. Homodimer.

Its subcellular location is the cytoplasm. The catalysed reaction is malonyl-[ACP] + acetyl-CoA + H(+) = 3-oxobutanoyl-[ACP] + CO2 + CoA. It functions in the pathway lipid metabolism; fatty acid biosynthesis. Its function is as follows. Catalyzes the condensation reaction of fatty acid synthesis by the addition to an acyl acceptor of two carbons from malonyl-ACP. Catalyzes the first condensation reaction which initiates fatty acid synthesis and may therefore play a role in governing the total rate of fatty acid production. Possesses both acetoacetyl-ACP synthase and acetyl transacylase activities. Its substrate specificity determines the biosynthesis of branched-chain and/or straight-chain of fatty acids. This Blochmanniella floridana protein is Beta-ketoacyl-[acyl-carrier-protein] synthase III.